A 609-amino-acid polypeptide reads, in one-letter code: UvrABC system protein C (609 aa).

In terms of domain architecture, GIY-YIG spans Thr-15–Val-92. The 36-residue stretch at Asp-202–Leu-237 folds into the UVR domain.

Belongs to the UvrC family. As to quaternary structure, interacts with UvrB in an incision complex.

The protein localises to the cytoplasm. Its function is as follows. The UvrABC repair system catalyzes the recognition and processing of DNA lesions. UvrC both incises the 5' and 3' sides of the lesion. The N-terminal half is responsible for the 3' incision and the C-terminal half is responsible for the 5' incision. The polypeptide is UvrABC system protein C (Coxiella burnetii (strain RSA 331 / Henzerling II)).